A 366-amino-acid chain; its full sequence is Protein-glutamate methylesterase/protein-glutamine glutaminase (366 aa).

Residues 5–123 (RVLVVDDSVV…SVGRSMEQVR (119 aa)) enclose the Response regulatory domain. The residue at position 56 (Asp-56) is a 4-aspartylphosphate. The 193-residue stretch at 163–355 (PLGGHRLLVI…PEILRRLARQ (193 aa)) folds into the CheB-type methylesterase domain. Active-site residues include Ser-175, His-201, and Asp-297.

This sequence belongs to the CheB family. Phosphorylated by CheA. Phosphorylation of the N-terminal regulatory domain activates the methylesterase activity.

It is found in the cytoplasm. It carries out the reaction [protein]-L-glutamate 5-O-methyl ester + H2O = L-glutamyl-[protein] + methanol + H(+). The catalysed reaction is L-glutaminyl-[protein] + H2O = L-glutamyl-[protein] + NH4(+). Functionally, involved in chemotaxis. Part of a chemotaxis signal transduction system that modulates chemotaxis in response to various stimuli. Catalyzes the demethylation of specific methylglutamate residues introduced into the chemoreceptors (methyl-accepting chemotaxis proteins or MCP) by CheR. Also mediates the irreversible deamidation of specific glutamine residues to glutamic acid. This Nocardioides sp. (strain ATCC BAA-499 / JS614) protein is Protein-glutamate methylesterase/protein-glutamine glutaminase.